A 663-amino-acid chain; its full sequence is MSGPSSANPAASQDACYISLLGLAEYFRTSQPPNIKKCIQCLQALFTFTPPSKVEARTHLQMGQILMAYTRNIDMARQHLEKAWNISESLMNFDDVKFDTASLLAQLHLQTEPSSNAAKAMLRRAVELSQNNVYWHCKLLLQLSQIHASDREYSSASELLAVGADSAEEAGATYLKVLFLLSRAMILMIERKTNDVLALLNSAGQIIDNNIPNPHQKEYLKVFFLVLQVCYYLALGQVKTVKPSLKQLQMSIQTIMAPNWPSDDTIFGSNQLEMFVWLPKEQLYVLVYLVTVSHSMMAGYMDKAQKYTEKALTQIEKLKLQEDKPILSVFKVILLEHIVMCRMVMGNRELAIREIAAARDVCLAAPQRRSLLKRHSAQLHCLIGLYAMSTSFFDHAERQFLVCVSETTERDLKLFANLNLAIIYLRTKRETDLKQILDAVSTENTHTYSSQALMGGFYYVQGLHAFHKNSFHEAKRFLRETLKMANAEDLNRLTSCSLVLLSHVFLSIGNSKESMNMVTPAMQLASKIPDIHVQLWGSAILKDLHRMSKDAQHEKEAYANHVKYSENLIADQRKCVQSSHHELVNWFHGDPPITTGAPLTLPVIPEAINNPVTPLTPSSAAVAATAGAAASTTPMTQTNVAVASTSALQPPVGAVAGQFGQFY.

TPR repeat units follow at residues 455-488 (GGFY…ANAE) and 495-528 (SCSL…ASKI).

Belongs to the SCC4/mau-2 family. Interacts with Nipped-B to form the cohesin loading complex.

Its subcellular location is the nucleus. The protein resides in the nucleoplasm. Functionally, required for association of the cohesin complex with chromatin during interphase. Plays a role in sister chromatid cohesion and normal progression through prometaphase. The protein is MAU2 chromatid cohesion factor homolog of Drosophila willistoni (Fruit fly).